Here is a 155-residue protein sequence, read N- to C-terminus: Probable calcium-binding protein CML9 (155 aa).

3 consecutive EF-hand domains span residues 8–43, 86–121, and 122–155; these read EQVD…LGQN, ATEK…HGDR, and LTEE…MNNK. Residues D21, D23, D25, R27, and E32 each coordinate Ca(2+).

Functionally, potential calcium sensor. The polypeptide is Probable calcium-binding protein CML9 (CML9) (Oryza sativa subsp. japonica (Rice)).